The following is a 181-amino-acid chain: ATP-dependent protease subunit HslV (181 aa).

Residue Thr-9 is part of the active site. Residues Ala-166, Cys-169, and Thr-172 each coordinate Na(+).

It belongs to the peptidase T1B family. HslV subfamily. In terms of assembly, a double ring-shaped homohexamer of HslV is capped on each side by a ring-shaped HslU homohexamer. The assembly of the HslU/HslV complex is dependent on binding of ATP.

Its subcellular location is the cytoplasm. It catalyses the reaction ATP-dependent cleavage of peptide bonds with broad specificity.. Allosterically activated by HslU binding. Its function is as follows. Protease subunit of a proteasome-like degradation complex believed to be a general protein degrading machinery. The protein is ATP-dependent protease subunit HslV of Staphylococcus aureus (strain JH1).